Reading from the N-terminus, the 361-residue chain is tRNA-specific 2-thiouridylase MnmA (361 aa).

Residues 6 to 13 (LVSGGVDS) and I32 each bind ATP. Positions 93–95 (NPD) are interaction with target base in tRNA. C98 acts as the Nucleophile in catalysis. Residues C98 and C193 are joined by a disulfide bond. G121 is an ATP binding site. An interaction with tRNA region spans residues 143-145 (KDQ). The active-site Cysteine persulfide intermediate is C193.

This sequence belongs to the MnmA/TRMU family.

It localises to the cytoplasm. It carries out the reaction S-sulfanyl-L-cysteinyl-[protein] + uridine(34) in tRNA + AH2 + ATP = 2-thiouridine(34) in tRNA + L-cysteinyl-[protein] + A + AMP + diphosphate + H(+). Catalyzes the 2-thiolation of uridine at the wobble position (U34) of tRNA, leading to the formation of s(2)U34. This chain is tRNA-specific 2-thiouridylase MnmA, found in Porphyromonas gingivalis (strain ATCC 33277 / DSM 20709 / CIP 103683 / JCM 12257 / NCTC 11834 / 2561).